Reading from the N-terminus, the 142-residue chain is Transcriptional regulator MraZ (142 aa).

2 consecutive SpoVT-AbrB domains span residues 5–46 and 75–118; these read THPV…DRSE and AAAQ…DSEA.

This sequence belongs to the MraZ family. Forms oligomers.

The protein resides in the cytoplasm. It localises to the nucleoid. The chain is Transcriptional regulator MraZ from Tropheryma whipplei (strain TW08/27) (Whipple's bacillus).